The primary structure comprises 161 residues: Ferredoxin/F(420)H(2)-dependent CoB-CoM heterodisulfide reductase subunit C (161 aa).

4Fe-4S ferredoxin-type domains lie at 10–40 and 51–82; these read KAEGLDLLSCMHCGICTGSCPSGRHTGLNTR and AAVLSDYDLWLCTTCYTCQERCPRGIPITDAI. [4Fe-4S] cluster is bound by residues Cys-19, Cys-22, Cys-25, Cys-29, Cys-62, Cys-65, Cys-68, and Cys-72.

The protein belongs to the HdrC family. As to quaternary structure, the ferredoxin/F(420)H(2)-dependent CoB-CoM heterodisulfide reductase is composed of three subunits; HdrA2, HdrB2 and HdrC2. [4Fe-4S] cluster serves as cofactor.

It is found in the cytoplasm. It carries out the reaction coenzyme B + coenzyme M + 2 oxidized [2Fe-2S]-[ferredoxin] = coenzyme M-coenzyme B heterodisulfide + 2 reduced [2Fe-2S]-[ferredoxin] + 2 H(+). The catalysed reaction is coenzyme B + 2 oxidized coenzyme F420-(gamma-L-Glu)(n) + coenzyme M + 2 reduced [2Fe-2S]-[ferredoxin] + 4 H(+) = coenzyme M-coenzyme B heterodisulfide + 2 reduced coenzyme F420-(gamma-L-Glu)(n) + 2 oxidized [2Fe-2S]-[ferredoxin]. Its pathway is cofactor metabolism; coenzyme M-coenzyme B heterodisulfide reduction; coenzyme B and coenzyme M from coenzyme M-coenzyme B heterodisulfide: step 1/1. Functionally, part of a complex that catalyzes the reversible reduction of CoM-S-S-CoB to the thiol-coenzymes H-S-CoM (coenzyme M) and H-S-CoB (coenzyme B). Catalyzes the transfer of electrons from ferredoxin to CoM-S-S-CoB during methanogenesis from acetate. Electrons transfer from ferredoxin to CoM-S-S-CoB via HdrA2, HdrC2 and HdrB2. In addition, the complex can use electron bifurcation to direct electron pairs from reduced coenzyme F420 towards the reduction of both ferredoxin and CoB-CoM heterodisulfide. This activity may take place during Fe(III)-dependent anaerobic methane oxidation. This Methanosarcina acetivorans (strain ATCC 35395 / DSM 2834 / JCM 12185 / C2A) protein is Ferredoxin/F(420)H(2)-dependent CoB-CoM heterodisulfide reductase subunit C.